A 623-amino-acid polypeptide reads, in one-letter code: Endoglucanase 12 (623 aa).

The Cytoplasmic segment spans residues 1–73 (MYSANHWGGS…LGCVVVKRKL (73 aa)). A helical; Signal-anchor for type II membrane protein membrane pass occupies residues 74 to 94 (LWWVLWTLLAAFILIGLPVII). The Extracellular portion of the chain corresponds to 95-623 (AKSIPKKKPH…TPPPPSKWKP (529 aa)). Catalysis depends on aspartate 166, which acts as the Nucleophile. Asparagine 217, asparagine 236, asparagine 324, asparagine 345, asparagine 408, and asparagine 425 each carry an N-linked (GlcNAc...) asparagine glycan. Residues histidine 513, aspartate 561, and glutamate 570 contribute to the active site.

The protein belongs to the glycosyl hydrolase 9 (cellulase E) family. In terms of tissue distribution, ubiquitous.

Its subcellular location is the membrane. It catalyses the reaction Endohydrolysis of (1-&gt;4)-beta-D-glucosidic linkages in cellulose, lichenin and cereal beta-D-glucans.. This Oryza sativa subsp. japonica (Rice) protein is Endoglucanase 12 (GLU3).